The chain runs to 368 residues: Aminomethyltransferase (368 aa).

The protein belongs to the GcvT family. In terms of assembly, the glycine cleavage system is composed of four proteins: P, T, L and H.

It catalyses the reaction N(6)-[(R)-S(8)-aminomethyldihydrolipoyl]-L-lysyl-[protein] + (6S)-5,6,7,8-tetrahydrofolate = N(6)-[(R)-dihydrolipoyl]-L-lysyl-[protein] + (6R)-5,10-methylene-5,6,7,8-tetrahydrofolate + NH4(+). The glycine cleavage system catalyzes the degradation of glycine. The chain is Aminomethyltransferase from Alkaliphilus oremlandii (strain OhILAs) (Clostridium oremlandii (strain OhILAs)).